A 343-amino-acid chain; its full sequence is N-acetyl-gamma-glutamyl-phosphate reductase (343 aa).

Residue Cys149 is part of the active site.

It belongs to the NAGSA dehydrogenase family. Type 1 subfamily.

The protein resides in the cytoplasm. It carries out the reaction N-acetyl-L-glutamate 5-semialdehyde + phosphate + NADP(+) = N-acetyl-L-glutamyl 5-phosphate + NADPH + H(+). The protein operates within amino-acid biosynthesis; L-arginine biosynthesis; N(2)-acetyl-L-ornithine from L-glutamate: step 3/4. Its function is as follows. Catalyzes the NADPH-dependent reduction of N-acetyl-5-glutamyl phosphate to yield N-acetyl-L-glutamate 5-semialdehyde. This Alkalilimnicola ehrlichii (strain ATCC BAA-1101 / DSM 17681 / MLHE-1) protein is N-acetyl-gamma-glutamyl-phosphate reductase.